Here is a 212-residue protein sequence, read N- to C-terminus: Large ribosomal subunit protein uL1 (212 aa).

This sequence belongs to the universal ribosomal protein uL1 family. As to quaternary structure, part of the 50S ribosomal subunit.

Its function is as follows. Binds directly to 23S rRNA. Probably involved in E site tRNA release. Functionally, protein L1 is also a translational repressor protein, it controls the translation of its operon by binding to its mRNA. This Methanosphaera stadtmanae (strain ATCC 43021 / DSM 3091 / JCM 11832 / MCB-3) protein is Large ribosomal subunit protein uL1.